A 356-amino-acid polypeptide reads, in one-letter code: MKRDLLLTKIEEYKNIMPWYVLDYYQSKLSVPYSFTTLYEYLKEYKRFFEWLIDSDLSKAARIADVDLTTLEHLSKKDMEAFILYLRERPSLNIYSTKKGVSQTTINRTLSALSSLYKYLTEEVENEHGEPYFYRNVMKKVATKKKRETLAARAENIKQKLFLGDETMAFLDYVDKEYEYKLSNRAKASFRKNKERDLAIIALLLASGIRLSEAVNLDLKDVNLNMMLVEVTRKGGKRDSVNVAAFAKPHLEAYLSVRKDRYQAEKQDVAFFLTAYRGLPNRIDASSIEKMVGKYSEGFKIRVTPHKLRHTLATRLYDTTKSQVLVSHQLGHASTQVTDLYTHIVNDEQKNALDKL.

The 106-residue stretch at 16 to 121 (IMPWYVLDYY…ALSSLYKYLT (106 aa)) folds into the Core-binding (CB) domain. Positions 169–354 (AFLDYVDKEY…VNDEQKNALD (186 aa)) constitute a Tyr recombinase domain. Catalysis depends on residues R210, K234, H306, R309, and H332. Catalysis depends on Y341, which acts as the O-(3'-phospho-DNA)-tyrosine intermediate.

This sequence belongs to the 'phage' integrase family. XerS subfamily.

Its subcellular location is the cytoplasm. Its activity is regulated as follows. FtsK is required for recombination. In terms of biological role, site-specific tyrosine recombinase, which acts by catalyzing the cutting and rejoining of the recombining DNA molecules. Essential to convert dimers of the bacterial chromosome into monomers to permit their segregation at cell division. This Streptococcus equi subsp. equi (strain 4047) protein is Tyrosine recombinase XerS.